The chain runs to 320 residues: Malate dehydrogenase (320 aa).

NAD(+)-binding positions include 10–15 (GAGQIG) and Asp-34. Substrate contacts are provided by Arg-83 and Arg-89. NAD(+) is bound by residues Asn-96 and 119–121 (ITN). Positions 121 and 152 each coordinate substrate. Catalysis depends on His-176, which acts as the Proton acceptor.

It belongs to the LDH/MDH superfamily. MDH type 3 family.

It carries out the reaction (S)-malate + NAD(+) = oxaloacetate + NADH + H(+). Its function is as follows. Catalyzes the reversible oxidation of malate to oxaloacetate. The sequence is that of Malate dehydrogenase from Beijerinckia indica subsp. indica (strain ATCC 9039 / DSM 1715 / NCIMB 8712).